Reading from the N-terminus, the 616-residue chain is Ectonucleoside triphosphate diphosphohydrolase 4 (616 aa).

At 1-33 the chain is on the cytoplasmic side; the sequence is MGRIGISCLFPASWHFSISPVGCPRILNTNLRQ. A helical transmembrane segment spans residues 34 to 54; sequence IMVISVLAAAVSLLYFSVVII. Residues 55–559 are Lumenal-facing; sequence RNKYGRLTRD…ASHTHWRGVS (505 aa). Residue glutamate 222 is the Proton acceptor of the active site. A disulfide bridge links cysteine 368 with cysteine 395. Asparagine 404 and asparagine 407 each carry an N-linked (GlcNAc...) asparagine glycan. Residues cysteine 461 and cysteine 490 are joined by a disulfide bond. The helical transmembrane segment at 560-580 threads the bilayer; sequence FVYNHYLFSGCFLVVLLAILL. The Cytoplasmic portion of the chain corresponds to 581-616; sequence YLLRLRRIHRRTPRSSSAAALWMEEGLPAQNAPGTL.

The protein belongs to the GDA1/CD39 NTPase family. Ca(2+) serves as cofactor. Mg(2+) is required as a cofactor. Ubiquitous. Highest expression in testis and lowest in bladder.

It localises to the cytoplasmic vesicle. Its subcellular location is the autophagosome membrane. It is found in the lysosome membrane. The protein resides in the golgi apparatus membrane. The enzyme catalyses a ribonucleoside 5'-diphosphate + H2O = a ribonucleoside 5'-phosphate + phosphate + H(+). It catalyses the reaction a ribonucleoside 5'-triphosphate + H2O = a ribonucleoside 5'-diphosphate + phosphate + H(+). The catalysed reaction is UDP + H2O = UMP + phosphate + H(+). It carries out the reaction UTP + H2O = UDP + phosphate + H(+). The enzyme catalyses CTP + H2O = CDP + phosphate + H(+). It catalyses the reaction GDP + H2O = GMP + phosphate + H(+). The catalysed reaction is GTP + H2O = GDP + phosphate + H(+). It carries out the reaction 5-methyl-UTP + H2O = 5-methyl-UDP + phosphate + H(+). Catalyzes the hydrolysis of nucleoside triphosphates and diphosphates in a calcium- or magnesium-dependent manner, with a preference for pyrimidines. Preferentially hydrolyzes UTP and TTP. AMP, ADP, ATP and UMP are not substrates. Preferentially activated by Ca(2+) over Mg(2+). In terms of biological role, has a broad substrate specificity with the ability of cleaving all nucleotide di- and triphosphates with the exception of adenosine di- and triphosphate (ADP and ATP). Preferentially hydrolyzes CTP, UDP, CDP, GTP and GDP. Can use either Ca(2+) or Mg(2+) equally. The protein is Ectonucleoside triphosphate diphosphohydrolase 4 of Homo sapiens (Human).